A 513-amino-acid chain; its full sequence is ATP synthase subunit alpha (513 aa).

169–176 (GDRQIGKS) contributes to the ATP binding site.

The protein belongs to the ATPase alpha/beta chains family. In terms of assembly, F-type ATPases have 2 components, CF(1) - the catalytic core - and CF(0) - the membrane proton channel. CF(1) has five subunits: alpha(3), beta(3), gamma(1), delta(1), epsilon(1). CF(0) has three main subunits: a(1), b(2) and c(9-12). The alpha and beta chains form an alternating ring which encloses part of the gamma chain. CF(1) is attached to CF(0) by a central stalk formed by the gamma and epsilon chains, while a peripheral stalk is formed by the delta and b chains.

The protein localises to the cell inner membrane. The catalysed reaction is ATP + H2O + 4 H(+)(in) = ADP + phosphate + 5 H(+)(out). In terms of biological role, produces ATP from ADP in the presence of a proton gradient across the membrane. The alpha chain is a regulatory subunit. This Colwellia psychrerythraea (strain 34H / ATCC BAA-681) (Vibrio psychroerythus) protein is ATP synthase subunit alpha.